The chain runs to 689 residues: Methionine--tRNA ligase (689 aa).

The 'HIGH' region motif lies at 15 to 25 (PYANGPIHLGH). Residues Cys146, Cys149, Cys159, and Cys162 each contribute to the Zn(2+) site. Residues 332–336 (KMSKS) carry the 'KMSKS' region motif. ATP is bound at residue Lys335. The disordered stretch occupies residues 554–574 (DAPKTAAPEKTAEASSVSSEP). The tRNA-binding domain occupies 588–689 (DFAKIDLRIA…EGAQPGMRVK (102 aa)).

Belongs to the class-I aminoacyl-tRNA synthetase family. MetG type 1 subfamily. In terms of assembly, homodimer. It depends on Zn(2+) as a cofactor.

The protein localises to the cytoplasm. The catalysed reaction is tRNA(Met) + L-methionine + ATP = L-methionyl-tRNA(Met) + AMP + diphosphate. Is required not only for elongation of protein synthesis but also for the initiation of all mRNA translation through initiator tRNA(fMet) aminoacylation. This is Methionine--tRNA ligase from Shewanella baltica (strain OS185).